The chain runs to 80 residues: U19-lycotoxin-Ls1a (80 aa).

Residues 1 to 22 form the signal peptide; sequence MSPKVQALIFIVGLITLLAAHA. The propeptide occupies 23–34; that stretch reads QEELSDNTESER. 4 disulfide bridges follow: Cys36/Cys50, Cys43/Cys55, Cys49/Cys66, and Cys57/Cys64.

The protein belongs to the neurotoxin 02 (plectoxin) family. 05 (U19-lycotoxin) subfamily. As to expression, expressed by the venom gland.

The protein resides in the secreted. This Lycosa singoriensis (Wolf spider) protein is U19-lycotoxin-Ls1a.